The chain runs to 186 residues: Peptidyl-tRNA hydrolase (186 aa).

Tyr14 contacts tRNA. Residue His19 is the Proton acceptor of the active site. The tRNA site is built by Tyr61, Asn63, and Asn107.

The protein belongs to the PTH family. As to quaternary structure, monomer.

The protein localises to the cytoplasm. It carries out the reaction an N-acyl-L-alpha-aminoacyl-tRNA + H2O = an N-acyl-L-amino acid + a tRNA + H(+). Its function is as follows. Hydrolyzes ribosome-free peptidyl-tRNAs (with 1 or more amino acids incorporated), which drop off the ribosome during protein synthesis, or as a result of ribosome stalling. Catalyzes the release of premature peptidyl moieties from peptidyl-tRNA molecules trapped in stalled 50S ribosomal subunits, and thus maintains levels of free tRNAs and 50S ribosomes. The polypeptide is Peptidyl-tRNA hydrolase (Helicobacter acinonychis (strain Sheeba)).